Reading from the N-terminus, the 347-residue chain is Phosphoribosylformylglycinamidine cyclo-ligase (347 aa).

The protein belongs to the AIR synthase family.

Its subcellular location is the cytoplasm. It carries out the reaction 2-formamido-N(1)-(5-O-phospho-beta-D-ribosyl)acetamidine + ATP = 5-amino-1-(5-phospho-beta-D-ribosyl)imidazole + ADP + phosphate + H(+). The protein operates within purine metabolism; IMP biosynthesis via de novo pathway; 5-amino-1-(5-phospho-D-ribosyl)imidazole from N(2)-formyl-N(1)-(5-phospho-D-ribosyl)glycinamide: step 2/2. The polypeptide is Phosphoribosylformylglycinamidine cyclo-ligase (Desulfatibacillum aliphaticivorans).